The sequence spans 289 residues: Diaminopimelate epimerase (289 aa).

Residues Asn11 and Asn78 each contribute to the substrate site. Cys87 (proton donor) is an active-site residue. Substrate is bound by residues 88-89, Asn163, Asn199, and 217-218; these read GN and ER. Residue Cys226 is the Proton acceptor of the active site. Residue 227-228 participates in substrate binding; it reads GT.

The protein belongs to the diaminopimelate epimerase family. As to quaternary structure, homodimer.

It is found in the cytoplasm. The enzyme catalyses (2S,6S)-2,6-diaminopimelate = meso-2,6-diaminopimelate. It functions in the pathway amino-acid biosynthesis; L-lysine biosynthesis via DAP pathway; DL-2,6-diaminopimelate from LL-2,6-diaminopimelate: step 1/1. Catalyzes the stereoinversion of LL-2,6-diaminopimelate (L,L-DAP) to meso-diaminopimelate (meso-DAP), a precursor of L-lysine and an essential component of the bacterial peptidoglycan. This chain is Diaminopimelate epimerase, found in Rhodococcus jostii (strain RHA1).